Consider the following 194-residue polypeptide: Peptidyl-tRNA hydrolase (194 aa).

Position 16 (Y16) interacts with tRNA. H21 (proton acceptor) is an active-site residue. TRNA contacts are provided by F67, N69, and N115.

The protein belongs to the PTH family. In terms of assembly, monomer.

Its subcellular location is the cytoplasm. The enzyme catalyses an N-acyl-L-alpha-aminoacyl-tRNA + H2O = an N-acyl-L-amino acid + a tRNA + H(+). Its function is as follows. Hydrolyzes ribosome-free peptidyl-tRNAs (with 1 or more amino acids incorporated), which drop off the ribosome during protein synthesis, or as a result of ribosome stalling. Catalyzes the release of premature peptidyl moieties from peptidyl-tRNA molecules trapped in stalled 50S ribosomal subunits, and thus maintains levels of free tRNAs and 50S ribosomes. This is Peptidyl-tRNA hydrolase from Salmonella paratyphi B (strain ATCC BAA-1250 / SPB7).